The sequence spans 349 residues: Probable G-protein coupled receptor 21 (349 aa).

Residues 1–32 (MNSTWDGNQSSHPFCLLALGYLETVRFCLLEV) are Extracellular-facing. N-linked (GlcNAc...) asparagine glycans are attached at residues N2 and N8. Residues 33 to 53 (LIIVFLTVLIISGNIIVIFVF) traverse the membrane as a helical segment. Residues 54–75 (HCAPLLNHHSTSYFIQTMAYAD) are Cytoplasmic-facing. The helical transmembrane segment at 76-96 (LLVGVSCLVPSLSLLYYPLPI) threads the bilayer. Topologically, residues 97–104 (EEAMTCQV) are extracellular. A helical membrane pass occupies residues 105 to 125 (FGFVVSVLKSISMASLACISI). The Cytoplasmic segment spans residues 126-147 (DRYIAITKPLTYNTLVTPWRLR). A helical membrane pass occupies residues 148–168 (LCIFLIWLYSTLVFLPSFFHW). Residues 169-191 (GKPGYHGDVFQWCAESWHTNSYF) are Extracellular-facing. Residues 192–212 (TLFIVMMLYAPAALIVCFTYF) form a helical membrane-spanning segment. The Cytoplasmic portion of the chain corresponds to 213 to 252 (NIFRICQQHTKEISERQARFSSQNGETGEPQTCPDKRYAM). The helical transmembrane segment at 253 to 273 (VLFRITSVFYVLWLPYIIYFL) threads the bilayer. Residues 274 to 283 (LESSTGCSSR) lie on the Extracellular side of the membrane. The helical transmembrane segment at 284 to 304 (LASFLTTWLAISNSFCNCIIY) threads the bilayer. The Cytoplasmic portion of the chain corresponds to 305–349 (SLSNSVFQRGLKGLSGSLCTSCASHTTAKDPYTVRCKGPPNGSHI).

This sequence belongs to the G-protein coupled receptor 1 family.

The protein resides in the cell membrane. In terms of biological role, orphan receptor. The chain is Probable G-protein coupled receptor 21 (Gpr21) from Mus musculus (Mouse).